Reading from the N-terminus, the 321-residue chain is Lipoyl synthase (321 aa).

The [4Fe-4S] cluster site is built by cysteine 68, cysteine 73, cysteine 79, cysteine 94, cysteine 98, cysteine 101, and serine 308. Residues phenylalanine 80 to threonine 297 enclose the Radical SAM core domain.

The protein belongs to the radical SAM superfamily. Lipoyl synthase family. [4Fe-4S] cluster is required as a cofactor.

It localises to the cytoplasm. The catalysed reaction is [[Fe-S] cluster scaffold protein carrying a second [4Fe-4S](2+) cluster] + N(6)-octanoyl-L-lysyl-[protein] + 2 oxidized [2Fe-2S]-[ferredoxin] + 2 S-adenosyl-L-methionine + 4 H(+) = [[Fe-S] cluster scaffold protein] + N(6)-[(R)-dihydrolipoyl]-L-lysyl-[protein] + 4 Fe(3+) + 2 hydrogen sulfide + 2 5'-deoxyadenosine + 2 L-methionine + 2 reduced [2Fe-2S]-[ferredoxin]. It functions in the pathway protein modification; protein lipoylation via endogenous pathway; protein N(6)-(lipoyl)lysine from octanoyl-[acyl-carrier-protein]: step 2/2. Catalyzes the radical-mediated insertion of two sulfur atoms into the C-6 and C-8 positions of the octanoyl moiety bound to the lipoyl domains of lipoate-dependent enzymes, thereby converting the octanoylated domains into lipoylated derivatives. The sequence is that of Lipoyl synthase from Salmonella typhi.